A 328-amino-acid polypeptide reads, in one-letter code: Malate dehydrogenase (328 aa).

G11–G17 contributes to the NAD(+) binding site. Substrate contacts are provided by R92 and R98. Residues N105, Q112, and T129 to N131 contribute to the NAD(+) site. Substrate contacts are provided by N131 and R162. The active-site Proton acceptor is the H187.

The protein belongs to the LDH/MDH superfamily. MDH type 2 family.

It carries out the reaction (S)-malate + NAD(+) = oxaloacetate + NADH + H(+). In terms of biological role, catalyzes the reversible oxidation of malate to oxaloacetate. The sequence is that of Malate dehydrogenase from Paenarthrobacter aurescens (strain TC1).